The following is a 195-amino-acid chain: Putative CheY-P phosphatase CheC1 (195 aa).

This sequence belongs to the CheC family.

In terms of biological role, catalyzes the dephosphorylation of CheY-P. The polypeptide is Putative CheY-P phosphatase CheC1 (cheC1) (Halobacterium salinarum (strain ATCC 29341 / DSM 671 / R1)).